Reading from the N-terminus, the 365-residue chain is Caffeic acid 3-O-methyltransferase (365 aa).

Substrate is bound at residue 130-136 (MNQDKVL). Positions 162–180 (AFEYHGTDPRFNKVFNRGM) are substrate binding. S-adenosyl-L-methionine is bound by residues G208, D231, D251, M252, and K265. The active-site Proton acceptor is the H269.

It belongs to the class I-like SAM-binding methyltransferase superfamily. Cation-independent O-methyltransferase family. COMT subfamily. In terms of assembly, homodimer.

The catalysed reaction is (E)-caffeate + S-adenosyl-L-methionine = (E)-ferulate + S-adenosyl-L-homocysteine + H(+). Its pathway is aromatic compound metabolism; phenylpropanoid biosynthesis. Its function is as follows. Catalyzes the conversion of caffeic acid to ferulic acid and of 5-hydroxyferulic acid to sinapic acid. The resulting products may subsequently be converted to the corresponding alcohols that are incorporated into lignins. The protein is Caffeic acid 3-O-methyltransferase (COMT1) of Prunus dulcis (Almond).